A 356-amino-acid chain; its full sequence is Tyrosine recombinase XerS (356 aa).

The Core-binding (CB) domain occupies 16-121; the sequence is IMPWFVLDYY…ALSSLYKYLT (106 aa). Residues 169–354 enclose the Tyr recombinase domain; sequence EFLDYVDCEY…VNDEQKNALD (186 aa). Catalysis depends on residues R210, K234, H306, R309, and H332. Y341 acts as the O-(3'-phospho-DNA)-tyrosine intermediate in catalysis.

It belongs to the 'phage' integrase family. XerS subfamily.

Its subcellular location is the cytoplasm. With respect to regulation, ftsK is required for recombination. In terms of biological role, site-specific tyrosine recombinase, which acts by catalyzing the cutting and rejoining of the recombining DNA molecules. Essential to convert dimers of the bacterial chromosome into monomers to permit their segregation at cell division. The sequence is that of Tyrosine recombinase XerS from Streptococcus uberis (strain ATCC BAA-854 / 0140J).